We begin with the raw amino-acid sequence, 105 residues long: Protein S100-A11 (105 aa).

Position 1 is an N-acetylmethionine (methionine 1). N-acetylalanine; in Protein S100-A11, N-terminally processed is present on alanine 2. Lysine 3 carries the N6-acetyllysine modification. Phosphoserine is present on residues serine 5 and serine 6. Threonine 10 is modified (phosphothreonine). 2 EF-hand domains span residues cysteine 13 to alanine 49 and lysine 55 to alanine 90. At lysine 27 the chain carries N6-acetyllysine. Ca(2+) contacts are provided by threonine 33, glutamate 38, aspartate 68, asparagine 70, aspartate 72, glutamine 74, and glutamate 79.

This sequence belongs to the S-100 family. Homodimer; disulfide-linked. Post-translationally, phosphorylation at Thr-10 by PRKCA significantly suppresses homodimerization and promotes association with NCL/nucleolin which induces nuclear translocation.

The protein resides in the cytoplasm. Its subcellular location is the nucleus. Its function is as follows. Facilitates the differentiation and the cornification of keratinocytes. This is Protein S100-A11 (S100A11) from Homo sapiens (Human).